Here is a 588-residue protein sequence, read N- to C-terminus: Neuropeptide-like 1 (588 aa).

The propeptide occupies 1-179; it reads MQCIPKKTFM…DPEVLEYSPD (179 aa). Positions 115 to 143 are disordered; the sequence is NGDLPITIQERESDNDDEEKRSASSSDNV. Thr-194 carries the post-translational modification Threonine amide. A serine amide mark is found at Ser-210, Ser-227, and Ser-244. Tyrosine amide is present on Tyr-260. Glutamic acid 1-amide is present on Glu-281. Residues 285–299 constitute a propeptide that is removed on maturation; the sequence is SIASLARSGDWPSVA. A Tyrosine amide modification is found at Tyr-318. Residues 321–588 constitute a propeptide that is removed on maturation; sequence SLSDDREAPS…SNSHIAPRSM (268 aa). The segment at 342 to 382 is disordered; that stretch reads GNSEGKENEWQATPFTVSEDLDEGKAKNRSNRRIEASQTRH.

Its subcellular location is the secreted. The sequence is that of Neuropeptide-like 1 from Camponotus floridanus (Florida carpenter ant).